Here is a 227-residue protein sequence, read N- to C-terminus: Phosphoglycolate phosphatase (227 aa).

Asp-14 serves as the catalytic Nucleophile. The Mg(2+) site is built by Asp-14, Asp-16, and Asp-177.

This sequence belongs to the HAD-like hydrolase superfamily. CbbY/CbbZ/Gph/YieH family. Requires Mg(2+) as cofactor.

The catalysed reaction is 2-phosphoglycolate + H2O = glycolate + phosphate. The protein operates within organic acid metabolism; glycolate biosynthesis; glycolate from 2-phosphoglycolate: step 1/1. Its function is as follows. Specifically catalyzes the dephosphorylation of 2-phosphoglycolate. Is involved in the dissimilation of the intracellular 2-phosphoglycolate formed during the DNA repair of 3'-phosphoglycolate ends, a major class of DNA lesions induced by oxidative stress. The protein is Phosphoglycolate phosphatase of Thiobacillus denitrificans (strain ATCC 25259 / T1).